We begin with the raw amino-acid sequence, 127 residues long: Major sperm protein 152 (127 aa).

Threonine 2 carries the N-acetylthreonine modification. Residues 9–126 (DIQTQPGTKI…RRKNLPIEYN (118 aa)) enclose the MSP domain.

In terms of tissue distribution, sperm.

Its subcellular location is the cell projection. The protein localises to the pseudopodium. It localises to the cytoplasm. It is found in the cytoskeleton. Central component in molecular interactions underlying sperm crawling. Forms an extensive filament system that extends from sperm villipoda, along the leading edge of the pseudopod. The chain is Major sperm protein 152 (msp-152) from Caenorhabditis elegans.